The chain runs to 866 residues: Leucine--tRNA ligase (866 aa).

A 'HIGH' region motif is present at residues 42–52 (PYPSGKLHMGH). The short motif at 624 to 628 (TMSKS) is the 'KMSKS' region element. Lysine 627 is an ATP binding site.

The protein belongs to the class-I aminoacyl-tRNA synthetase family.

The protein localises to the cytoplasm. It carries out the reaction tRNA(Leu) + L-leucine + ATP = L-leucyl-tRNA(Leu) + AMP + diphosphate. The chain is Leucine--tRNA ligase from Nitrosospira multiformis (strain ATCC 25196 / NCIMB 11849 / C 71).